Reading from the N-terminus, the 269-residue chain is NAD-capped RNA hydrolase NudC (269 aa).

Arg-74 is a binding site for substrate. The Zn(2+) site is built by Cys-103, Cys-106, Cys-121, and Cys-124. Tyr-129 provides a ligand contact to substrate. The region spanning 130-253 (PRIFPCIIVA…TIARQLIENT (124 aa)) is the Nudix hydrolase domain. Residues Ala-163, Glu-179, and Glu-183 each coordinate a divalent metal cation. The short motif at 164 to 185 (GFLEVGETLEQCVAREVKEETG) is the Nudix box element. 197–204 (QPWAFPSS) contributes to the substrate binding site. Glu-224 is a binding site for a divalent metal cation. Position 246 (Ala-246) interacts with substrate.

The protein belongs to the Nudix hydrolase family. NudC subfamily. In terms of assembly, homodimer. Mg(2+) is required as a cofactor. Mn(2+) serves as cofactor. Requires Zn(2+) as cofactor.

It carries out the reaction a 5'-end NAD(+)-phospho-ribonucleoside in mRNA + H2O = a 5'-end phospho-adenosine-phospho-ribonucleoside in mRNA + beta-nicotinamide D-ribonucleotide + 2 H(+). It catalyses the reaction NAD(+) + H2O = beta-nicotinamide D-ribonucleotide + AMP + 2 H(+). The enzyme catalyses NADH + H2O = reduced beta-nicotinamide D-ribonucleotide + AMP + 2 H(+). Its function is as follows. mRNA decapping enzyme that specifically removes the nicotinamide adenine dinucleotide (NAD) cap from a subset of mRNAs by hydrolyzing the diphosphate linkage to produce nicotinamide mononucleotide (NMN) and 5' monophosphate mRNA. The NAD-cap is present at the 5'-end of some mRNAs and stabilizes RNA against 5'-processing. Has preference for mRNAs with a 5'-end purine. Catalyzes the hydrolysis of a broad range of dinucleotide pyrophosphates. The protein is NAD-capped RNA hydrolase NudC of Vibrio atlanticus (strain LGP32) (Vibrio splendidus (strain Mel32)).